The chain runs to 505 residues: ATP synthase subunit beta, mitochondrial (505 aa).

Residue 184–191 (GGAGVGKT) participates in ATP binding.

It belongs to the ATPase alpha/beta chains family. In terms of assembly, F-type ATPases have 2 components, CF(1) - the catalytic core - and CF(0) - the membrane proton channel. CF(1) has five subunits: alpha(3), beta(3), gamma(1), delta(1), epsilon(1). CF(0) has three main subunits: a, b and c.

It localises to the mitochondrion. The protein resides in the mitochondrion inner membrane. The catalysed reaction is ATP + H2O + 4 H(+)(in) = ADP + phosphate + 5 H(+)(out). In terms of biological role, mitochondrial membrane ATP synthase (F(1)F(0) ATP synthase or Complex V) produces ATP from ADP in the presence of a proton gradient across the membrane which is generated by electron transport complexes of the respiratory chain. F-type ATPases consist of two structural domains, F(1) - containing the extramembraneous catalytic core, and F(0) - containing the membrane proton channel, linked together by a central stalk and a peripheral stalk. During catalysis, ATP synthesis in the catalytic domain of F(1) is coupled via a rotary mechanism of the central stalk subunits to proton translocation. Subunits alpha and beta form the catalytic core in F(1). Rotation of the central stalk against the surrounding alpha(3)beta(3) subunits leads to hydrolysis of ATP in three separate catalytic sites on the beta subunits. The sequence is that of ATP synthase subunit beta, mitochondrial (ATP2) from Kluyveromyces lactis (strain ATCC 8585 / CBS 2359 / DSM 70799 / NBRC 1267 / NRRL Y-1140 / WM37) (Yeast).